The following is a 794-amino-acid chain: Ent-kaurene synthase 1, chloroplastic (794 aa).

The transit peptide at 1–28 directs the protein to the chloroplast; it reads MSLLLSNSVLVGPKFRSSRISHASASLD. The Mg(2+) site is built by D543, D547, N687, and E695. Positions 543–547 match the DDXXD motif motif; it reads DDFFD.

This sequence belongs to the terpene synthase family. The cofactor is Mg(2+). In terms of tissue distribution, accumulates in leaves, and, at low levels, in germinating seeds.

It localises to the plastid. It is found in the chloroplast. The enzyme catalyses ent-copalyl diphosphate = ent-kaur-16-ene + diphosphate. Its pathway is secondary metabolite biosynthesis; terpenoid biosynthesis. It participates in plant hormone biosynthesis; gibberellin biosynthesis. In terms of biological role, involved in the biosynthesis of ent-kaurene diterpenoids natural products such as oridonin, miltiradiene, eriocalyxin B and nezukol, known to exhibit antitumor, anti-inflammatory and antibacterial activities, and in the production of gibberellins phytohormones. Catalyzes the conversion of ent-copalyl diphosphate (ent-CPP) to ent-kaurene. This is Ent-kaurene synthase 1, chloroplastic from Isodon eriocalyx (Plectranthus eriocalyx).